Reading from the N-terminus, the 417-residue chain is Type IV inositol polyphosphate 5-phosphatase 9 (417 aa).

2 catalytic regions span residues 258–273 (DRVI…ISLP) and 339–354 (KKRA…WYGN).

The protein belongs to the inositol polyphosphate 5-phosphatase family. In terms of tissue distribution, specifically expressed in roots.

It catalyses the reaction a 1,2-diacyl-sn-glycero-3-phospho-(1D-myo-inositol-4,5-bisphosphate) + H2O = a 1,2-diacyl-sn-glycero-3-phospho-(1D-myo-inositol 4-phosphate) + phosphate. The enzyme catalyses a 1,2-diacyl-sn-glycero-3-phospho-(1D-myo-inositol-3,4,5-trisphosphate) + H2O = a 1,2-diacyl-sn-glycero-3-phospho-(1D-myo-inositol-3,4-bisphosphate) + phosphate. Has phosphatase activity toward PtdIns(4,5)P2 and at a lower extent toward PtdIns(3,4,5)P3 but not toward Ins(1,4,5)P3. Functions in salt stress response by regulating reactive oxygen species (ROS) production, endocytosis, Ca(2+) influx and stress-responsive genes expression. The sequence is that of Type IV inositol polyphosphate 5-phosphatase 9 from Arabidopsis thaliana (Mouse-ear cress).